The sequence spans 755 residues: Kelch-like protein 5 (755 aa).

The tract at residues 152-184 (LDRPEVDDGTSEEENESDSSSCRTSNSSQTLSS) is disordered. Acidic residues predominate over residues 158–168 (DDGTSEEENES). Residues 169–184 (DSSSCRTSNSSQTLSS) show a composition bias toward low complexity. Positions 220 to 287 (CDVILVAGDR…AYTGRLELKE (68 aa)) constitute a BTB domain. 6 Kelch repeats span residues 468–514 (TLFA…VLDD), 515–561 (KLYV…VLEG), 563–608 (MYAV…VLSG), 609–655 (KLYA…TWNG), 657–708 (LYAI…LLGD), and 709–754 (KLYA…VTVK).

As to expression, expressed in adrenal gland, ovary and thyroid gland and less abundantly in lymph node, prostate, spinal cord, testis and trachea.

The protein localises to the cytoplasm. It localises to the cytoskeleton. The sequence is that of Kelch-like protein 5 (KLHL5) from Homo sapiens (Human).